A 444-amino-acid polypeptide reads, in one-letter code: Methylenetetrahydrofolate--tRNA-(uracil-5-)-methyltransferase TrmFO (444 aa).

Gly10 to Gly15 is a binding site for FAD.

The protein belongs to the MnmG family. TrmFO subfamily. Requires FAD as cofactor.

Its subcellular location is the cytoplasm. It carries out the reaction uridine(54) in tRNA + (6R)-5,10-methylene-5,6,7,8-tetrahydrofolate + NADH + H(+) = 5-methyluridine(54) in tRNA + (6S)-5,6,7,8-tetrahydrofolate + NAD(+). The enzyme catalyses uridine(54) in tRNA + (6R)-5,10-methylene-5,6,7,8-tetrahydrofolate + NADPH + H(+) = 5-methyluridine(54) in tRNA + (6S)-5,6,7,8-tetrahydrofolate + NADP(+). In terms of biological role, catalyzes the folate-dependent formation of 5-methyl-uridine at position 54 (M-5-U54) in all tRNAs. This is Methylenetetrahydrofolate--tRNA-(uracil-5-)-methyltransferase TrmFO from Streptococcus pneumoniae serotype 2 (strain D39 / NCTC 7466).